A 369-amino-acid polypeptide reads, in one-letter code: Aminomethyltransferase (369 aa).

It belongs to the GcvT family. The glycine cleavage system is composed of four proteins: P, T, L and H.

It carries out the reaction N(6)-[(R)-S(8)-aminomethyldihydrolipoyl]-L-lysyl-[protein] + (6S)-5,6,7,8-tetrahydrofolate = N(6)-[(R)-dihydrolipoyl]-L-lysyl-[protein] + (6R)-5,10-methylene-5,6,7,8-tetrahydrofolate + NH4(+). In terms of biological role, the glycine cleavage system catalyzes the degradation of glycine. The protein is Aminomethyltransferase of Xanthomonas oryzae pv. oryzae (strain PXO99A).